A 1057-amino-acid polypeptide reads, in one-letter code: Adenylate-forming reductase stbB (1057 aa).

The adenylation (A) domain stretch occupies residues 21 to 378 (STKRQPGAVC…FRLRTDMNFE (358 aa)). AMP is bound by residues His251, 344 to 345 (NF), Thr349, and 423 to 426 (AVGR). Residues 564 to 651 (ETLEEDIKAL…QMAAAIKNPS (88 aa)) form the Carrier domain. The residue at position 600 (Ser600) is an O-(pantetheine 4'-phosphoryl)serine. The interval 693–1025 (IVVVTGSSGS…SGAVILGTDV (333 aa)) is reductase (R) domain. NADP(+)-binding positions include 700-703 (SGSL), 783-785 (AAW), Tyr858, and Lys862.

The protein belongs to the adenylate-forming reductase family.

The catalysed reaction is ilicicolinate B + AH2 + ATP = ilicicolin B + A + AMP + diphosphate. Its pathway is secondary metabolite biosynthesis; terpenoid biosynthesis. Functionally, nonribosomal peptide synthase-like protein; part of the cluster that mediates the biosynthesis of LL-Z1272-beta, also known as ilicicolin B, a prenylated aryl-aldehyde produced by several fungi and that serves as a key pathway intermediate for many fungal meroterpenoids. The first step in the pathway is performed by the non-reducing polyketide synthase stbA that produces orsellinic acid by condensing acetyl-CoA with 3 malonyl-CoA units. The prenyltransferase stbC then prenylates orsenilic acid into grifolic acid. Finally, grifolic acid is reduced to ilicicolin B by the NRPS-like protein stbB. This chain is Adenylate-forming reductase stbB, found in Stachybotrys bisbyi (Hyalostachybotrys bisbyi).